The sequence spans 401 residues: Argininosuccinate synthase (401 aa).

Residue 8 to 16 (AYSGGLDTS) coordinates ATP. Position 87 (Y87) interacts with L-citrulline. G117 lines the ATP pocket. Residues T119, N123, and D124 each contribute to the L-aspartate site. N123 contributes to the L-citrulline binding site. Positions 127, 175, 259, and 271 each coordinate L-citrulline.

Belongs to the argininosuccinate synthase family. Type 1 subfamily. As to quaternary structure, homotetramer.

It is found in the cytoplasm. The catalysed reaction is L-citrulline + L-aspartate + ATP = 2-(N(omega)-L-arginino)succinate + AMP + diphosphate + H(+). The protein operates within amino-acid biosynthesis; L-arginine biosynthesis; L-arginine from L-ornithine and carbamoyl phosphate: step 2/3. This is Argininosuccinate synthase from Paenarthrobacter aurescens (strain TC1).